We begin with the raw amino-acid sequence, 418 residues long: Light-independent protochlorophyllide reductase subunit N (418 aa).

[4Fe-4S] cluster is bound by residues cysteine 17, cysteine 42, and cysteine 103.

It belongs to the BchN/ChlN family. As to quaternary structure, protochlorophyllide reductase is composed of three subunits; ChlL, ChlN and ChlB. Forms a heterotetramer of two ChlB and two ChlN subunits. [4Fe-4S] cluster is required as a cofactor.

The enzyme catalyses chlorophyllide a + oxidized 2[4Fe-4S]-[ferredoxin] + 2 ADP + 2 phosphate = protochlorophyllide a + reduced 2[4Fe-4S]-[ferredoxin] + 2 ATP + 2 H2O. The protein operates within porphyrin-containing compound metabolism; chlorophyll biosynthesis (light-independent). Its function is as follows. Component of the dark-operative protochlorophyllide reductase (DPOR) that uses Mg-ATP and reduced ferredoxin to reduce ring D of protochlorophyllide (Pchlide) to form chlorophyllide a (Chlide). This reaction is light-independent. The NB-protein (ChlN-ChlB) is the catalytic component of the complex. The chain is Light-independent protochlorophyllide reductase subunit N from Prochlorococcus marinus (strain SARG / CCMP1375 / SS120).